The primary structure comprises 796 residues: MIPVAEFKQFTEQQPAFKVLKPWWDVLAEYLTVAMLMIGVFGCTLQVTQDKIICLPNHELQENLSEAPCQQLLPRGIPEQIGALQEVKGLKNNLDLQQYSFINQLCYETALHWYAKYFPYLVVIHTLIFMVCTSFWFKFPGTSSKIEHFISILGKCFDSPWTTRALSEVSGENQKGPAATERAAATIVAMAGTGPGKAGEGEKEKVLAEPEKVVTEPPVVTLLDKKEGEQAKALFEKVKKFRMHVEEGDILYTMYIRQTVLKVCKFLAILVYNLVYVEKISFLVACRVETSEVTGYASFCCNHTKAHLFSKLAFCYISFVCIYGLTCIYTLYWLFHRPLKEYSFRSVREETGMGDIPDVKNDFAFMLHLIDQYDSLYSKRFAVFLSEVSESRLKQLNLNHEWTPEKLRQKLQRNAAGRLELALCMLPGLPDTVFELSEVESLRLEAICDITFPPGLSQLVHLQELSLLHSPARLPFSLQVFLRDHLKVMRVKCEELREVPLWVFGLRGLEELHLEGLFPQELARAATLESLRELKQLKVLSLRSNAGKVPASVTDVAGHLQRLSLHNDGARLVALNSLKKLAALRELELVACGLERIPHAVFSLGALQELDLKDNHLRSIEEILSFQHCRKLVTLRLWHNQIAYVPEHVRKLRSLEQLYLSYNKLETLPSQLGLCSGLRLLDVSHNGLHSLPPEVGLLQNLQHLALSYNALEALPEELFFCRKLRTLLLGDNQLSQLSPHVGALRALSRLELKGNRLEALPEELGNCGGLKKAGLLVEDTLYQGLPAEVRDKMEEE.

The Cytoplasmic segment spans residues 1–22 (MIPVAEFKQFTEQQPAFKVLKP). Residues 23–43 (WWDVLAEYLTVAMLMIGVFGC) form a helical membrane-spanning segment. The Extracellular segment spans residues 44-116 (TLQVTQDKII…YETALHWYAK (73 aa)). Cys-54 and Cys-301 are disulfide-bonded. Residue Asn-63 is glycosylated (N-linked (GlcNAc...) asparagine). Residues 117 to 137 (YFPYLVVIHTLIFMVCTSFWF) form a helical membrane-spanning segment. At 138–265 (KFPGTSSKIE…IRQTVLKVCK (128 aa)) the chain is on the cytoplasmic side. A helical membrane pass occupies residues 266 to 286 (FLAILVYNLVYVEKISFLVAC). Over 287 to 313 (RVETSEVTGYASFCCNHTKAHLFSKLA) the chain is Extracellular. Asn-302 carries N-linked (GlcNAc...) asparagine glycosylation. Residues 314–334 (FCYISFVCIYGLTCIYTLYWL) traverse the membrane as a helical segment. Residues 335–796 (FHRPLKEYSF…AEVRDKMEEE (462 aa)) lie on the Cytoplasmic side of the membrane. LRR repeat units lie at residues 508-529 (GLEE…ATLE), 536-557 (QLKV…TDVA), 559-579 (HLQR…NSLK), 583-604 (ALRE…VFSL), 606-627 (ALQE…LSFQ), 631-652 (KLVT…VRKL), 654-675 (SLEQ…LGLC), 677-698 (GLRL…VGLL), 700-721 (NLQH…LFFC), 723-744 (KLRT…VGAL), and 746-767 (ALSR…LGNC).

Belongs to the LRRC8 family. Heterohexamer; oligomerizes with other LRRC8 proteins (LRRC8A, LRRC8C, LRRC8D and/or LRRC8B) to form a heterohexamer. In vivo, the subunit composition may depend primarily on expression levels, and heterooligomeric channels containing various proportions of the different LRRC8 proteins may coexist.

It is found in the cell membrane. Its subcellular location is the endoplasmic reticulum membrane. The protein resides in the lysosome membrane. It carries out the reaction chloride(in) = chloride(out). The catalysed reaction is iodide(out) = iodide(in). The enzyme catalyses taurine(out) = taurine(in). It catalyses the reaction 2',3'-cGAMP(out) = 2',3'-cGAMP(in). Its function is as follows. Non-essential component of the volume-regulated anion channel (VRAC, also named VSOAC channel), an anion channel required to maintain a constant cell volume in response to extracellular or intracellular osmotic changes. The VRAC channel conducts iodide better than chloride and can also conduct organic osmolytes like taurine. Mediates efflux of amino acids, such as aspartate, in response to osmotic stress. The VRAC channel also mediates transport of immunoreactive cyclic dinucleotide GMP-AMP (2'-3'-cGAMP), an immune messenger produced in response to DNA virus in the cytosol. Channel activity requires LRRC8A plus at least one other family member (LRRC8B, LRRC8C, LRRC8D or LRRC8E); channel characteristics depend on the precise subunit composition. Also plays a role in lysosome homeostasis by forming functional lysosomal VRAC channels in response to low cytoplasmic ionic strength condition: lysosomal VRAC channels are necessary for the formation of large lysosome-derived vacuoles, which store and then expel excess water to maintain cytosolic water homeostasis. This chain is Volume-regulated anion channel subunit LRRC8E, found in Homo sapiens (Human).